The sequence spans 135 residues: Sex-regulated protein janus-A (135 aa).

Substrate is bound at residue Lys37. The active-site Proton acceptor is the His63. 104–106 is a substrate binding site; the sequence is SQG.

The protein belongs to the janus family. Somatic and germline cells. Isoform B is expressed in both sexes and in somatic and germ line cells. Isoform A is expressed in males and is germ line specific.

JanA and janB regulate somatic sex differentiation. This chain is Sex-regulated protein janus-A (janA), found in Drosophila melanogaster (Fruit fly).